The chain runs to 396 residues: MTREVVLVGACRTPVGTFGGTLKDVGSAQLGAIVMGEAIKRAGIKAEQIDEVIFGCVLQAGLGQNVARQCMINAGIPKEVTAFTINKVCGSGLRAVSLAAQVIKAGDADIIMAGGTENMDKAPFILPNARWGYRMSMPKGDLIDEMVWGGLTDVFNGYHMGITAENINDMYGITREEQDAFGFRSQTLAAQAIESGRFKDEIVPVVIKGKKGDIVFDTDEHPRKSTPEAMAKLAPAFKKGGSVTAGNASGINDAAAAVIVMSKEKADELGIKPMAKVVSYASGGVDPSVMGLGPIPASRKALEKAGLTIDDIDLIEANEAFAAQSIAVARDLGWADKMEKVNVNGGAIAIGHPIGSSGARILVTLLYEMQKRGSKKGLATLCIGGGMGTALIVEAL.

Cys-89 serves as the catalytic Acyl-thioester intermediate. Residues 223–225 and Ser-249 contribute to the CoA site; that span reads RKS. Residues His-352 and Cys-382 each act as proton acceptor in the active site.

The protein belongs to the thiolase-like superfamily. Thiolase family.

It is found in the cytoplasm. The enzyme catalyses 2 acetyl-CoA = acetoacetyl-CoA + CoA. It functions in the pathway lipid metabolism; butanoate metabolism. Its function is as follows. Involved in syntrophic growth of S.wolfei with butyrate, as part of the butyrate oxidation pathway. Probably catalyzes the beta-keto thiolysis of acetoacetyl-CoA, leading to 2 acetyl-CoA molecules. The protein is Acetyl-CoA acetyltransferase of Syntrophomonas wolfei subsp. wolfei (strain DSM 2245B / Goettingen).